We begin with the raw amino-acid sequence, 692 residues long: DNA ligase (692 aa).

NAD(+) is bound by residues 35 to 39 (DLVYD), 88 to 89 (SL), and E117. The active-site N6-AMP-lysine intermediate is K119. 4 residues coordinate NAD(+): R140, E176, K301, and K325. The Zn(2+) site is built by C416, C419, C434, and C439. A BRCT domain is found at 611-692 (LTNQSNSWAS…FDLIKNSKKT (82 aa)).

This sequence belongs to the NAD-dependent DNA ligase family. LigA subfamily. Mg(2+) is required as a cofactor. Mn(2+) serves as cofactor.

It carries out the reaction NAD(+) + (deoxyribonucleotide)n-3'-hydroxyl + 5'-phospho-(deoxyribonucleotide)m = (deoxyribonucleotide)n+m + AMP + beta-nicotinamide D-nucleotide.. In terms of biological role, DNA ligase that catalyzes the formation of phosphodiester linkages between 5'-phosphoryl and 3'-hydroxyl groups in double-stranded DNA using NAD as a coenzyme and as the energy source for the reaction. It is essential for DNA replication and repair of damaged DNA. In Mesomycoplasma hyopneumoniae (strain 7448) (Mycoplasma hyopneumoniae), this protein is DNA ligase.